A 419-amino-acid polypeptide reads, in one-letter code: GTPase Obg (419 aa).

An Obg domain is found at M1–I156. Residues A157–E325 enclose the OBG-type G domain. GTP-binding positions include G163–S170, F188–A192, D209–G212, N279–D282, and S306–A308. S170 and T190 together coordinate Mg(2+). An OCT domain is found at K342–K419.

This sequence belongs to the TRAFAC class OBG-HflX-like GTPase superfamily. OBG GTPase family. As to quaternary structure, monomer. The cofactor is Mg(2+).

Its subcellular location is the cytoplasm. Its function is as follows. An essential GTPase which binds GTP, GDP and possibly (p)ppGpp with moderate affinity, with high nucleotide exchange rates and a fairly low GTP hydrolysis rate. Plays a role in control of the cell cycle, stress response, ribosome biogenesis and in those bacteria that undergo differentiation, in morphogenesis control. This chain is GTPase Obg, found in Endomicrobium trichonymphae.